A 446-amino-acid chain; its full sequence is Glutamate-1-semialdehyde 2,1-aminomutase (446 aa).

Position 263 is an N6-(pyridoxal phosphate)lysine (Lys263).

This sequence belongs to the class-III pyridoxal-phosphate-dependent aminotransferase family. HemL subfamily. The cofactor is pyridoxal 5'-phosphate.

The protein resides in the cytoplasm. It catalyses the reaction (S)-4-amino-5-oxopentanoate = 5-aminolevulinate. It functions in the pathway porphyrin-containing compound metabolism; protoporphyrin-IX biosynthesis; 5-aminolevulinate from L-glutamyl-tRNA(Glu): step 2/2. The protein is Glutamate-1-semialdehyde 2,1-aminomutase of Haloquadratum walsbyi (strain DSM 16790 / HBSQ001).